Reading from the N-terminus, the 329-residue chain is Flotillin-like protein FloA (329 aa).

The next 2 helical transmembrane spans lie at 5 to 25 and 27 to 47; these read IFLL…LSFI and LGLW…TLVG.

Belongs to the flotillin-like FloA family. As to quaternary structure, homooligomerizes.

It is found in the cell membrane. The protein resides in the membrane raft. In terms of biological role, found in functional membrane microdomains (FMM) that may be equivalent to eukaryotic membrane rafts. FMMs are highly dynamic and increase in number as cells age. Flotillins are thought to be important factors in membrane fluidity. The chain is Flotillin-like protein FloA from Thermoanaerobacter sp. (strain X514).